The primary structure comprises 693 residues: Homeobox protein caupolican (693 aa).

Disordered stretches follow at residues 20 to 104 (TANT…PSRG), 288 to 331 (NKMT…PGNQ), 387 to 453 (AQSH…DCGI), 480 to 538 (YLGQ…PLSM), 561 to 627 (MHLP…SMHS), and 648 to 693 (YGHG…RSGS). The segment covering 41–59 (ASLSPSGGSTATGLTAGPL) has biased composition (low complexity). The homeobox; TALE-type DNA-binding region spans 226–288 (LAARRKNATR…NARRRLKKEN (63 aa)). Basic and acidic residues-rich tracts occupy residues 288–298 (NKMTWEPKNKT) and 308–317 (DDEKEKDAGD). Composition is skewed to low complexity over residues 397-419 (HPQQ…QLQH) and 493-515 (QQLP…QQQQ). Basic residues predominate over residues 516–527 (QHHHHPHHHHPH). Over residues 609 to 627 (SSGGSSSSSGSSHSSSMHS) the composition is skewed to low complexity. Basic residues predominate over residues 651–675 (GHSHGHGHGHGHGLGHGHGLGHGHG).

This sequence belongs to the TALE/IRO homeobox family.

The protein resides in the nucleus. Controls proneural and vein forming genes. Positive transcriptional controller of ac-sc (achaete-scute). May act as an activator that interacts with the transcriptional complex assembled on the ac and sc promoters and participates in transcription initiation. This is Homeobox protein caupolican (caup) from Drosophila melanogaster (Fruit fly).